The primary structure comprises 623 residues: Methionine--tRNA ligase (623 aa).

The 'HIGH' region motif lies at 11-21; sequence PYANGPRHIGH. Positions 143, 146, 156, and 159 each coordinate Zn(2+). The 'KMSKS' region signature appears at 347–351; the sequence is KFSSS. Residue Ser350 participates in ATP binding.

The protein belongs to the class-I aminoacyl-tRNA synthetase family. MetG type 1 subfamily. Monomer. Zn(2+) is required as a cofactor.

Its subcellular location is the cytoplasm. It carries out the reaction tRNA(Met) + L-methionine + ATP = L-methionyl-tRNA(Met) + AMP + diphosphate. In terms of biological role, is required not only for elongation of protein synthesis but also for the initiation of all mRNA translation through initiator tRNA(fMet) aminoacylation. This Bifidobacterium animalis subsp. lactis (strain AD011) protein is Methionine--tRNA ligase.